A 198-amino-acid chain; its full sequence is NADH-quinone oxidoreductase subunit C (198 aa).

It belongs to the complex I 30 kDa subunit family. NDH-1 is composed of 14 different subunits. Subunits NuoB, C, D, E, F, and G constitute the peripheral sector of the complex.

Its subcellular location is the cell inner membrane. The enzyme catalyses a quinone + NADH + 5 H(+)(in) = a quinol + NAD(+) + 4 H(+)(out). Its function is as follows. NDH-1 shuttles electrons from NADH, via FMN and iron-sulfur (Fe-S) centers, to quinones in the respiratory chain. The immediate electron acceptor for the enzyme in this species is believed to be ubiquinone. Couples the redox reaction to proton translocation (for every two electrons transferred, four hydrogen ions are translocated across the cytoplasmic membrane), and thus conserves the redox energy in a proton gradient. This chain is NADH-quinone oxidoreductase subunit C, found in Janthinobacterium sp. (strain Marseille) (Minibacterium massiliensis).